Here is a 103-residue protein sequence, read N- to C-terminus: Integration host factor subunit beta (103 aa).

This sequence belongs to the bacterial histone-like protein family. As to quaternary structure, heterodimer of an alpha and a beta chain.

Its function is as follows. This protein is one of the two subunits of integration host factor, a specific DNA-binding protein that functions in genetic recombination as well as in transcriptional and translational control. The protein is Integration host factor subunit beta of Bradyrhizobium sp. (strain BTAi1 / ATCC BAA-1182).